The primary structure comprises 137 residues: Nucleoside diphosphate kinase (137 aa).

ATP-binding residues include K9, F57, R85, T91, R102, and N112. H115 (pros-phosphohistidine intermediate) is an active-site residue.

Belongs to the NDK family. Homotetramer. The cofactor is Mg(2+).

It is found in the cytoplasm. The catalysed reaction is a 2'-deoxyribonucleoside 5'-diphosphate + ATP = a 2'-deoxyribonucleoside 5'-triphosphate + ADP. It carries out the reaction a ribonucleoside 5'-diphosphate + ATP = a ribonucleoside 5'-triphosphate + ADP. Functionally, major role in the synthesis of nucleoside triphosphates other than ATP. The ATP gamma phosphate is transferred to the NDP beta phosphate via a ping-pong mechanism, using a phosphorylated active-site intermediate. This Nitratiruptor sp. (strain SB155-2) protein is Nucleoside diphosphate kinase.